The following is a 64-amino-acid chain: DNA-binding protein 7b (64 aa).

Lysine 5 and lysine 7 each carry N6-methyllysine.

It belongs to the 7 kDa DNA-binding/endoribonuclease P2 family. Monomer. Lys-5 and Lys-7 may be methylated.

The protein resides in the cytoplasm. Functionally, can constrain negative DNA supercoils. May be involved in maintaining the integrity of the genome at high temperature. This Saccharolobus shibatae (strain ATCC 51178 / DSM 5389 / JCM 8931 / NBRC 15437 / B12) (Sulfolobus shibatae) protein is DNA-binding protein 7b.